The primary structure comprises 370 residues: Probable G-protein coupled receptor 85 (370 aa).

The Extracellular segment spans residues 1 to 25 (MANYSHAADNILQNLSPLTAFLKLT). N-linked (GlcNAc...) asparagine glycosylation occurs at Asn3. Residues 26-46 (SLGFIIGVSVVGNLLISILLV) traverse the membrane as a helical segment. Residues 47–57 (KDKTLHRAPYY) lie on the Cytoplasmic side of the membrane. The helical transmembrane segment at 58–78 (FLLDLCCSDILRSAICFPFVF) threads the bilayer. Topologically, residues 79-96 (NSVKNGSTWTYGTLTCKV) are extracellular. N-linked (GlcNAc...) asparagine glycosylation occurs at Asn83. A disulfide bridge connects residues Cys94 and Cys172. The chain crosses the membrane as a helical span at residues 97–117 (IAFLGVLSCFHTAFMLFCISV). Residues 118–137 (TRYLAIAHHRFYTKRLTFWT) lie on the Cytoplasmic side of the membrane. A helical membrane pass occupies residues 138 to 158 (CLAVICMVWTLSVAMAFPPVL). The Extracellular portion of the chain corresponds to 159–188 (DVGTYSFIREEDQCTFQHRSFRANDSLGFM). Asn182 carries N-linked (GlcNAc...) asparagine glycosylation. A helical transmembrane segment spans residues 189–209 (LLLALILLATQLVYLKLIFFV). Over 210-286 (HDRRKMKPVQ…FKMEKRISRM (77 aa)) the chain is Cytoplasmic. A helical transmembrane segment spans residues 287-307 (FYIMTFLFLTLWGPYLVACYW). At 308–313 (RVFARG) the chain is on the extracellular side. The chain crosses the membrane as a helical span at residues 314–334 (PVVPGGFLTAAVWMSFAQAGI). The Cytoplasmic portion of the chain corresponds to 335 to 370 (NPFVCIFSNRELRRCFSTTLLYCRKSRLPREPYCVI).

This sequence belongs to the G-protein coupled receptor 1 family. Interacts with DLG4 and DLG3. In terms of tissue distribution, highly expressed in brain and testis. Lower levels in small intestine, placenta and spleen. In brain regions, detected in all regions tested, but somewhat lower levels in the corpus callosum, medulla and spinal cord.

The protein localises to the cell membrane. Its subcellular location is the endoplasmic reticulum. Its function is as follows. Orphan receptor. The polypeptide is Probable G-protein coupled receptor 85 (GPR85) (Homo sapiens (Human)).